The sequence spans 241 residues: Endothelial protein C receptor (241 aa).

Positions 1–20 (MLTKFLSLLLLLLLLGCAFC) are cleaved as a signal peptide. The Extracellular segment spans residues 21–213 (NSDGSQSLHM…GSQTGRSYTS (193 aa)). Residues Asn-47, Asn-64, Asn-139, Asn-165, and Asn-175 are each glycosylated (N-linked (GlcNAc...) asparagine). Residues 214-234 (LVLGILMGCFIIAGVAVGIFL) traverse the membrane as a helical segment. Over 235-241 (CTGGRRC) the chain is Cytoplasmic.

It is found in the membrane. Binds activated protein C. Enhances protein C activation by the thrombin-thrombomodulin complex; plays a role in the protein C pathway controlling blood coagulation. This chain is Endothelial protein C receptor (Procr), found in Rattus norvegicus (Rat).